A 495-amino-acid polypeptide reads, in one-letter code: DNA double-strand break repair helicase HerA (495 aa).

ATP-binding positions include arginine 141, 150 to 155 (GSGKSN), and 458 to 459 (KI).

Belongs to the HerA family. As to quaternary structure, forms a hexamer or a heptamer. Interacts with Mre11.

The catalysed reaction is Couples ATP hydrolysis with the unwinding of duplex DNA at the replication fork by translocating in the 5'-3' direction. This creates two antiparallel DNA single strands (ssDNA). The leading ssDNA polymer is the template for DNA polymerase III holoenzyme which synthesizes a continuous strand.. The enzyme catalyses ATP + H2O = ADP + phosphate + H(+). It catalyses the reaction Couples ATP hydrolysis with the unwinding of duplex DNA by translocating in the 3'-5' direction.. ATPase activity is slightly stimulated by either circular single- or double-stranded (ds)DNA with a weak preference for dsDNA. Helicase activity is stimulated by Mre11. Functionally, involved in DNA double-strand break (DSB) repair. Probably acts with NurA to stimulate resection of the 5' strand and produce the long 3' single-strand that is required for RadA loading. Has DNA-dependent ATPase activity and bidirectional DNA helicase activity. Loads on either a 3' or a 5' DNA tail for subsequent DNA unwinding. Can also unwind blunt-ended dsDNA, Holliday junction and splayed-arm DNA. In Sulfurisphaera tokodaii (strain DSM 16993 / JCM 10545 / NBRC 100140 / 7) (Sulfolobus tokodaii), this protein is DNA double-strand break repair helicase HerA.